Here is a 242-residue protein sequence, read N- to C-terminus: Orotidine 5'-phosphate decarboxylase (242 aa).

Substrate-binding positions include Asp16, Lys37, 64–73, Thr128, Arg190, Gln199, Gly219, and Arg220; that span reads DLKFHDIPNT. The active-site Proton donor is Lys66.

It belongs to the OMP decarboxylase family. Type 1 subfamily. As to quaternary structure, homodimer.

It catalyses the reaction orotidine 5'-phosphate + H(+) = UMP + CO2. The protein operates within pyrimidine metabolism; UMP biosynthesis via de novo pathway; UMP from orotate: step 2/2. In terms of biological role, catalyzes the decarboxylation of orotidine 5'-monophosphate (OMP) to uridine 5'-monophosphate (UMP). The protein is Orotidine 5'-phosphate decarboxylase of Prochlorococcus marinus (strain MIT 9215).